Consider the following 843-residue polypeptide: Neuroligin-1 (843 aa).

Positions 1-45 are cleaved as a signal peptide; the sequence is MALPRCMWPNYVWRAMMACVVHRGSGAPLTLCLLGCLLQTFHVLS. Residues 46-697 lie on the Extracellular side of the membrane; it reads QKLDDVDPLV…DQRDYSTELS (652 aa). N109 carries N-linked (GlcNAc...) (complex) asparagine glycosylation. A disulfide bond links C117 and C153. Residues 167–190 form a disordered region; the sequence is LTKKHTDDLGDNDGAEDEDIRDSG. Acidic residues predominate over residues 175-186; sequence LGDNDGAEDEDI. 2 N-linked (GlcNAc...) (complex) asparagine glycosylation sites follow: N303 and N343. Disulfide bonds link C342/C353 and C512/C546. The N-linked (GlcNAc...) asparagine glycan is linked to N547. Positions 647–688 are disordered; it reads TKVPSTDITLRPTRKNSTPVTSAFPTAKQDDPKQQPSPFSVD. Residues 661–670 are compositionally biased toward polar residues; it reads KNSTPVTSAF. S683 and S686 each carry an O-linked (GalNAc...) serine glycan. A helical membrane pass occupies residues 698 to 718; that stretch reads VTIAVGASLLFLNILAFAALY. Topologically, residues 719-843 are cytoplasmic; it reads YKKDKRRHDV…HPHSHSTTRV (125 aa). The segment at 822–843 is disordered; the sequence is GGQNNTLPHPHPHPHSHSTTRV. Basic residues predominate over residues 831-843; the sequence is PHPHPHSHSTTRV.

It belongs to the type-B carboxylesterase/lipase family. Interacts with neurexins NRXN1, NRXN2 and NRXN3. Interaction with neurexins is mediated by heparan sulfate glycan modification on neurexin. Interacts (via its C-terminus) with DLG4/PSD-95 (via PDZ domain 3). Interacts with AIP1, GOPC and PDZRN3. Interacts with NLGN3. In terms of tissue distribution, brain and arteries (at protein level). Expressed in olfactory bulb. Detected in brain.

The protein localises to the cell membrane. It is found in the postsynaptic density. It localises to the synaptic cleft. Its subcellular location is the synaptic cell membrane. Cell surface protein involved in cell-cell-interactions via its interactions with neurexin family members. Plays a role in synapse function and synaptic signal transmission, and probably mediates its effects by recruiting and clustering other synaptic proteins. May promote the initial formation of synapses, but is not essential for this. In vitro, triggers the de novo formation of presynaptic structures. May be involved in specification of excitatory synapses. Required to maintain wakefulness quality and normal synchrony of cerebral cortex activity during wakefulness and sleep. The protein is involved in nervous system development. The protein is Neuroligin-1 (Nlgn1) of Mus musculus (Mouse).